The following is a 347-amino-acid chain: Methylthioribose-1-phosphate isomerase (347 aa).

Substrate is bound by residues 45–47 (RGA), arginine 88, and glutamine 197. Aspartate 238 functions as the Proton donor in the catalytic mechanism. 248–249 (NK) lines the substrate pocket.

The protein belongs to the eIF-2B alpha/beta/delta subunits family. MtnA subfamily.

The catalysed reaction is 5-(methylsulfanyl)-alpha-D-ribose 1-phosphate = 5-(methylsulfanyl)-D-ribulose 1-phosphate. It functions in the pathway amino-acid biosynthesis; L-methionine biosynthesis via salvage pathway; L-methionine from S-methyl-5-thio-alpha-D-ribose 1-phosphate: step 1/6. Functionally, catalyzes the interconversion of methylthioribose-1-phosphate (MTR-1-P) into methylthioribulose-1-phosphate (MTRu-1-P). The protein is Methylthioribose-1-phosphate isomerase of Nostoc sp. (strain PCC 7120 / SAG 25.82 / UTEX 2576).